We begin with the raw amino-acid sequence, 115 residues long: MTRVKRGYVARKRRKRVLQLTQGFRGAHSVLFRTANQQNIKALRYASRDRARRKRDFRRLWITRINAGARKQGLSYSQLMHRFKKCGILINRKVLAQLALLDTKTFNQLVFYTDL.

The protein belongs to the bacterial ribosomal protein bL20 family.

It is found in the plastid. Its subcellular location is the chloroplast. Functionally, binds directly to 23S ribosomal RNA and is necessary for the in vitro assembly process of the 50S ribosomal subunit. It is not involved in the protein synthesizing functions of that subunit. The protein is Large ribosomal subunit protein bL20c of Chlorokybus atmophyticus (Soil alga).